The primary structure comprises 432 residues: MGNNVVVLGTQWGDEGKGKIVDLLTERAKYVVRYQGGHNAGHTLVINGEKTVLHLIPSGILRDNVTSIIGNGVVLSPAALMKEMKGLEDRGIPVRERLLLSEACPLILDYHVALDVAREKARGAKAIGTTGRGIGPAYEDKVARRGLRVGDLFDKATFADKLKEVMEYHNFQLVNFYKADAVDYQKVLDDVMAVADILTGMVVDVSDLLDQARKRGDFVMFEGAQGTLLDIDHGTYPYVTSSNTTAGGVATGSGLGPRYVDYVLGIIKAYSTRVGAGPFPTELFDDIGEFLCKQGNEFGATTGRRRRTGWLDVVAVRRAVQINSLSGFCLTKLDVLDGLKEVKLCIGYRMPDGREVTTTPLAADDWEGIEPIYETMPGWSETTFGVKARSGLPQAALDYIKRIEELTEVPIDIISTGPDRSETMILRDPFDA.

Residues 13–19 and 41–43 contribute to the GTP site; these read GDEGKGK and GHT. The active-site Proton acceptor is the Asp-14. 2 residues coordinate Mg(2+): Asp-14 and Gly-41. Residues 14–17, 39–42, Thr-130, Arg-144, Gln-225, Thr-240, and Arg-304 each bind IMP; these read DEGK and NAGH. His-42 functions as the Proton donor in the catalytic mechanism. 300–306 lines the substrate pocket; sequence ATTGRRR. Residues Arg-306, 332–334, and 415–417 each bind GTP; these read KLD and STG.

This sequence belongs to the adenylosuccinate synthetase family. Homodimer. Mg(2+) is required as a cofactor.

The protein localises to the cytoplasm. It catalyses the reaction IMP + L-aspartate + GTP = N(6)-(1,2-dicarboxyethyl)-AMP + GDP + phosphate + 2 H(+). Its pathway is purine metabolism; AMP biosynthesis via de novo pathway; AMP from IMP: step 1/2. In terms of biological role, plays an important role in the de novo pathway of purine nucleotide biosynthesis. Catalyzes the first committed step in the biosynthesis of AMP from IMP. The sequence is that of Adenylosuccinate synthetase from Enterobacter sp. (strain 638).